A 687-amino-acid chain; its full sequence is Transcription activator of gluconeogenesis SNOG_12336 (687 aa).

The segment at 1–56 (MASPDAEDASPSPEYRSDLDDDMAAEQKTDDGSPSQKSSNGQKPASNAKDPLRPRR) is disordered. Over residues 32–45 (GSPSQKSSNGQKPA) the composition is skewed to polar residues. The zn(2)-C6 fungal-type DNA-binding region spans 63 to 91 (CFACQRAHLTCGDERPCTRCIKRGLQDHC). 2 stretches are compositionally biased toward polar residues: residues 150-159 (PSGTFYQPPS) and 169-179 (HGRSFSDQQSP). Disordered regions lie at residues 150–214 (PSGT…GPLF), 300–411 (ESQS…KRHR), and 536–561 (GNSREADESEMSTQTNTTPNLTGQEA). Residues 195 to 212 (PPSSISQGQPGQMQQFGP) show a composition bias toward low complexity. Residues 300–318 (ESQSRQNSMHIHTPTSSAT) show a composition bias toward polar residues. Over residues 342–357 (PSSHSTASPASTDASA) the composition is skewed to low complexity. Polar residues-rich tracts occupy residues 362–384 (NPLSTATFFANTNRGQPQRSPTT), 392–402 (RPPSTALQPIH), and 546–561 (MSTQTNTTPNLTGQEA). The PAS domain maps to 482 to 553 (NLMTLQDHFT…SEMSTQTNTT (72 aa)).

The protein belongs to the ERT1/acuK family.

The protein localises to the nucleus. Functionally, transcription factor which regulates nonfermentable carbon utilization. Activator of gluconeogenetic genes. The sequence is that of Transcription activator of gluconeogenesis SNOG_12336 from Phaeosphaeria nodorum (strain SN15 / ATCC MYA-4574 / FGSC 10173) (Glume blotch fungus).